We begin with the raw amino-acid sequence, 605 residues long: Membrane protein insertase YidC (605 aa).

A helical transmembrane segment spans residues 8 to 28 (MIIAIALSLAVLLGWNYFVAA). The segment covering 35-47 (RQQQAQTSASPSP) has biased composition (low complexity). Positions 35 to 71 (RQQQAQTSASPSPKEGGPSAPVPGTLPGASGGNPQAA) are disordered. The next 4 helical transmembrane spans lie at 377-397 (LFGN…LFFL), 451-471 (WPVV…FVTI), 496-516 (LFGL…WPIV), and 540-560 (FTFM…GLVI).

This sequence belongs to the OXA1/ALB3/YidC family. Type 1 subfamily. As to quaternary structure, interacts with the Sec translocase complex via SecD. Specifically interacts with transmembrane segments of nascent integral membrane proteins during membrane integration.

The protein localises to the cell inner membrane. In terms of biological role, required for the insertion and/or proper folding and/or complex formation of integral membrane proteins into the membrane. Involved in integration of membrane proteins that insert both dependently and independently of the Sec translocase complex, as well as at least some lipoproteins. Aids folding of multispanning membrane proteins. The polypeptide is Membrane protein insertase YidC (Methylobacterium nodulans (strain LMG 21967 / CNCM I-2342 / ORS 2060)).